We begin with the raw amino-acid sequence, 403 residues long: Tyrosine--tRNA ligase (403 aa).

Residues 42 to 51 (PTAPDLHLGH) carry the 'HIGH' region motif. The 'KMSKS' region motif lies at 226-230 (KMSKS). Lysine 229 is an ATP binding site. The S4 RNA-binding domain maps to 336 to 396 (MPISAVLNKA…GKKAFGRVTL (61 aa)).

The protein belongs to the class-I aminoacyl-tRNA synthetase family. TyrS type 2 subfamily. As to quaternary structure, homodimer.

Its subcellular location is the cytoplasm. It carries out the reaction tRNA(Tyr) + L-tyrosine + ATP = L-tyrosyl-tRNA(Tyr) + AMP + diphosphate + H(+). In terms of biological role, catalyzes the attachment of tyrosine to tRNA(Tyr) in a two-step reaction: tyrosine is first activated by ATP to form Tyr-AMP and then transferred to the acceptor end of tRNA(Tyr). The sequence is that of Tyrosine--tRNA ligase from Pseudomonas savastanoi pv. phaseolicola (strain 1448A / Race 6) (Pseudomonas syringae pv. phaseolicola (strain 1448A / Race 6)).